The primary structure comprises 268 residues: tRNA pseudouridine synthase A (268 aa).

Asp-52 acts as the Nucleophile in catalysis. A substrate-binding site is contributed by Tyr-110.

This sequence belongs to the tRNA pseudouridine synthase TruA family. As to quaternary structure, homodimer.

It carries out the reaction uridine(38/39/40) in tRNA = pseudouridine(38/39/40) in tRNA. Its function is as follows. Formation of pseudouridine at positions 38, 39 and 40 in the anticodon stem and loop of transfer RNAs. In Prochlorococcus marinus (strain AS9601), this protein is tRNA pseudouridine synthase A.